Consider the following 348-residue polypeptide: Holliday junction branch migration complex subunit RuvB (348 aa).

Residues 4–184 form a large ATPase domain (RuvB-L) region; that stretch reads ADRLIAASGR…FGIVQRLEFY (181 aa). ATP contacts are provided by residues I23, R24, G65, K68, T69, T70, 131–133, R174, Y184, and R221; that span reads EDF. T69 lines the Mg(2+) pocket. Positions 185–255 are small ATPAse domain (RuvB-S); the sequence is NDKDLSTIVS…VADMALNLLD (71 aa). The segment at 258–348 is head domain (RuvB-H); it reads ERGFDHSDRR…GGDFSGPGDE (91 aa). DNA contacts are provided by R294, R313, and R318.

It belongs to the RuvB family. In terms of assembly, homohexamer. Forms an RuvA(8)-RuvB(12)-Holliday junction (HJ) complex. HJ DNA is sandwiched between 2 RuvA tetramers; dsDNA enters through RuvA and exits via RuvB. An RuvB hexamer assembles on each DNA strand where it exits the tetramer. Each RuvB hexamer is contacted by two RuvA subunits (via domain III) on 2 adjacent RuvB subunits; this complex drives branch migration. In the full resolvosome a probable DNA-RuvA(4)-RuvB(12)-RuvC(2) complex forms which resolves the HJ.

The protein localises to the cytoplasm. It carries out the reaction ATP + H2O = ADP + phosphate + H(+). Functionally, the RuvA-RuvB-RuvC complex processes Holliday junction (HJ) DNA during genetic recombination and DNA repair, while the RuvA-RuvB complex plays an important role in the rescue of blocked DNA replication forks via replication fork reversal (RFR). RuvA specifically binds to HJ cruciform DNA, conferring on it an open structure. The RuvB hexamer acts as an ATP-dependent pump, pulling dsDNA into and through the RuvAB complex. RuvB forms 2 homohexamers on either side of HJ DNA bound by 1 or 2 RuvA tetramers; 4 subunits per hexamer contact DNA at a time. Coordinated motions by a converter formed by DNA-disengaged RuvB subunits stimulates ATP hydrolysis and nucleotide exchange. Immobilization of the converter enables RuvB to convert the ATP-contained energy into a lever motion, pulling 2 nucleotides of DNA out of the RuvA tetramer per ATP hydrolyzed, thus driving DNA branch migration. The RuvB motors rotate together with the DNA substrate, which together with the progressing nucleotide cycle form the mechanistic basis for DNA recombination by continuous HJ branch migration. Branch migration allows RuvC to scan DNA until it finds its consensus sequence, where it cleaves and resolves cruciform DNA. The chain is Holliday junction branch migration complex subunit RuvB from Pseudomonas putida (strain ATCC 700007 / DSM 6899 / JCM 31910 / BCRC 17059 / LMG 24140 / F1).